Reading from the N-terminus, the 240-residue chain is tRNA (guanine-N(7)-)-methyltransferase (240 aa).

Positions 1–10 (MTESQDTPIT) are enriched in polar residues. The interval 1–20 (MTESQDTPITTDGEARPHRR) is disordered. Glutamate 70, glutamate 95, aspartate 122, and aspartate 145 together coordinate S-adenosyl-L-methionine. The active site involves aspartate 145. Substrate is bound by residues lysine 149, aspartate 181, and 218 to 221 (TKFE).

This sequence belongs to the class I-like SAM-binding methyltransferase superfamily. TrmB family.

It catalyses the reaction guanosine(46) in tRNA + S-adenosyl-L-methionine = N(7)-methylguanosine(46) in tRNA + S-adenosyl-L-homocysteine. Its pathway is tRNA modification; N(7)-methylguanine-tRNA biosynthesis. In terms of biological role, catalyzes the formation of N(7)-methylguanine at position 46 (m7G46) in tRNA. The chain is tRNA (guanine-N(7)-)-methyltransferase from Pseudomonas putida (strain W619).